The primary structure comprises 341 residues: tRNA N6-adenosine threonylcarbamoyltransferase (341 aa).

Residues histidine 111 and histidine 115 each coordinate Fe cation. Substrate-binding positions include 134 to 138 (LVSGG), aspartate 167, glycine 180, and asparagine 272. Position 300 (aspartate 300) interacts with Fe cation.

This sequence belongs to the KAE1 / TsaD family. Fe(2+) serves as cofactor.

It is found in the cytoplasm. The enzyme catalyses L-threonylcarbamoyladenylate + adenosine(37) in tRNA = N(6)-L-threonylcarbamoyladenosine(37) in tRNA + AMP + H(+). Required for the formation of a threonylcarbamoyl group on adenosine at position 37 (t(6)A37) in tRNAs that read codons beginning with adenine. Is involved in the transfer of the threonylcarbamoyl moiety of threonylcarbamoyl-AMP (TC-AMP) to the N6 group of A37, together with TsaE and TsaB. TsaD likely plays a direct catalytic role in this reaction. The chain is tRNA N6-adenosine threonylcarbamoyltransferase from Psychromonas ingrahamii (strain DSM 17664 / CCUG 51855 / 37).